A 180-amino-acid chain; its full sequence is Protein sll1483 (180 aa).

A signal peptide spans 1–26; sequence MKTAARIVAFTALTGFALGMPTVAMA. In terms of domain architecture, FAS1 spans 45-176; it reads AMTIVEVAAG…GVIHVIDQVI (132 aa).

The protein is Protein sll1483 of Synechocystis sp. (strain ATCC 27184 / PCC 6803 / Kazusa).